The chain runs to 640 residues: tRNA uridine 5-carboxymethylaminomethyl modification enzyme MnmG (640 aa).

9-14 (GGGHAG) is an FAD binding site. 289–303 (GPRYCPSIEDKINKF) contributes to the NAD(+) binding site.

This sequence belongs to the MnmG family. Homodimer. Heterotetramer of two MnmE and two MnmG subunits. It depends on FAD as a cofactor.

Its subcellular location is the cytoplasm. Its function is as follows. NAD-binding protein involved in the addition of a carboxymethylaminomethyl (cmnm) group at the wobble position (U34) of certain tRNAs, forming tRNA-cmnm(5)s(2)U34. The chain is tRNA uridine 5-carboxymethylaminomethyl modification enzyme MnmG from Campylobacter hominis (strain ATCC BAA-381 / DSM 21671 / CCUG 45161 / LMG 19568 / NCTC 13146 / CH001A).